The chain runs to 1213 residues: DNA-directed RNA polymerase subunit beta' (1213 aa).

Residues Cys-60, Cys-62, Cys-75, and Cys-78 each contribute to the Zn(2+) site. Mg(2+)-binding residues include Asp-449, Asp-451, and Asp-453. 4 residues coordinate Zn(2+): Cys-818, Cys-892, Cys-899, and Cys-902.

This sequence belongs to the RNA polymerase beta' chain family. In terms of assembly, the RNAP catalytic core consists of 2 alpha, 1 beta, 1 beta' and 1 omega subunit. When a sigma factor is associated with the core the holoenzyme is formed, which can initiate transcription. Mg(2+) serves as cofactor. Requires Zn(2+) as cofactor.

It carries out the reaction RNA(n) + a ribonucleoside 5'-triphosphate = RNA(n+1) + diphosphate. DNA-dependent RNA polymerase catalyzes the transcription of DNA into RNA using the four ribonucleoside triphosphates as substrates. The polypeptide is DNA-directed RNA polymerase subunit beta' (Lactiplantibacillus plantarum (strain ATCC BAA-793 / NCIMB 8826 / WCFS1) (Lactobacillus plantarum)).